The sequence spans 767 residues: Golgin subfamily A member 1 (767 aa).

The interval T13–S58 is disordered. A phosphoserine mark is found at S30, S36, S41, S47, S50, and S51. A coiled-coil region spans residues S50–I657. The 50-residue stretch at T688–T737 folds into the GRIP domain. Residues K748–S767 are disordered.

As to quaternary structure, interacts with RAB6A. Directly interacts with TBC1D23. Interacts with FAM91A1; this interaction may be mediated by TBC1D23. Interacts with ARL1; this interaction recruits Golgin-97/GOLGA1 onto the Golgi apparatus. In terms of processing, MARylated by PARP12; MARylation is required for basolateral export of E-Cadherin.

The protein resides in the golgi apparatus membrane. The protein localises to the golgi apparatus. Its subcellular location is the trans-Golgi network membrane. It localises to the cytoplasmic vesicle. It is found in the secretory vesicle. The protein resides in the acrosome. Involved in vesicular trafficking at the Golgi apparatus level. Involved in endosome-to-Golgi trafficking. Mechanistically, captures transport vesicles arriving from endosomes via the protein TBC1D23. Recognized vesicles are then tethered to the trans-Golgi before subsequent SNARE engagement and vesicle fusion. Selectively regulates E-cadherin transport from the trans-Golgi network in tubulovesicular carriers. Functionally, (Microbial infection) Plays an important role in poxvirus morphogenesis. Translocates into the viral factories where it may transport the membrane fragments and associated protein factors important for virus maturation to the sites of virion assembly. The chain is Golgin subfamily A member 1 (GOLGA1) from Homo sapiens (Human).